A 266-amino-acid polypeptide reads, in one-letter code: Lectin 7 (266 aa).

The first 27 residues, 1 to 27 (MAINTSRTQILFITIISFLILAQNVNS), serve as a signal peptide directing secretion. N-linked (GlcNAc...) asparagine glycans are attached at residues Asn-121, Asn-205, and Asn-219.

The protein belongs to the leguminous lectin family.

Its function is as follows. May be involved in arbuscular mycorrhizal (AM) symbiosis with AM fungi. This Medicago truncatula (Barrel medic) protein is Lectin 7.